Consider the following 90-residue polypeptide: Small ribosomal subunit protein bS18 (90 aa).

The tract at residues 1 to 23 (MKPMRQKNTRAQGNKSISNALAS) is disordered. Residues 9-21 (TRAQGNKSISNAL) are compositionally biased toward polar residues.

The protein belongs to the bacterial ribosomal protein bS18 family. In terms of assembly, part of the 30S ribosomal subunit. Forms a tight heterodimer with protein bS6.

In terms of biological role, binds as a heterodimer with protein bS6 to the central domain of the 16S rRNA, where it helps stabilize the platform of the 30S subunit. The chain is Small ribosomal subunit protein bS18 from Chlorobium luteolum (strain DSM 273 / BCRC 81028 / 2530) (Pelodictyon luteolum).